The chain runs to 319 residues: MKPENKLPVLDLISAEMKTVVNTLQPDLPPWPATGTIAEQRQYYTLERRFWNVSAPEMATRAYRVPTKYGQVKTRIFYPQPDSPATLFYLHGGGFILGNLDTHDRIMRLLASYSQCTVIGIDYTLSPEARFPQAIEEIVAACCYFHQQAEDYQINMSRIGFAGDSAGAMLALASALWLRDKQIDCGKVAGVLLWYGLYGLRDSVTRRLLGGVWDGLTQQDLQMYEEAYLSNDADRESPYYCLFNNDLTREVPPCFIAGAEFDPLLDDSRLLYQTLAAHQQPCEFKLYPGTLHAFLHYSRMMKTADEALRDGAQFFTAQL.

Residues 91 to 93 carry the Involved in the stabilization of the negatively charged intermediate by the formation of the oxyanion hole motif; the sequence is HGG. Residues Ser-165, Asp-262, and His-292 contribute to the active site.

The protein belongs to the 'GDXG' lipolytic enzyme family. In terms of assembly, homodimer. Interacts with MalT and MelA.

It localises to the cytoplasm. Functionally, displays esterase activity towards short chain fatty esters (acyl chain length of up to 8 carbons). Able to hydrolyze triacetylglycerol (triacetin) and tributyrylglycerol (tributyrin), but not trioleylglycerol (triolein) or cholesterol oleate. Negatively regulates MalT activity by antagonizing maltotriose binding. Inhibits MelA galactosidase activity. This is Acetyl esterase from Escherichia coli O81 (strain ED1a).